The chain runs to 367 residues: Developmentally-regulated GTP-binding protein 1 (367 aa).

Position 2 is an N-acetylserine (S2). The required for interaction with STK16 stretch occupies residues S2 to A16. The residue at position 22 (K22) is a (3S)-3-hydroxylysine. The region spanning A65–K290 is the OBG-type G domain. Residues G71 to S78, F96 to T100, D117 to G120, N248 to D251, and S271 to H273 contribute to the GTP site. Mg(2+)-binding residues include S78 and T98. A Phosphothreonine; by STK16 modification is found at T100. The 77-residue stretch at K290–K366 folds into the TGS domain.

The protein belongs to the TRAFAC class OBG-HflX-like GTPase superfamily. OBG GTPase family. Interacts (via its C-terminal) with TAL1. Interacts with DFRP1/ZC3H15; this interaction prevents DRG1 poly-ubiquitination and degradation by proteasome. DRG1-ZC3H15/DFRP1 complex co-sediments with polysomes. Interacts with STK16. Interacts with JMJD7. Post-translationally, sumoylated by UBE2I in response to MEKK1-mediated stimuli. In terms of processing, hydroxylated (with S stereochemistry) at C-3 of Lys-22 by JMJD7. Phosphorylated at Thr-100 by STK16. Post-translationally, polyubiquitinated; this modification induces proteolytic degradation and is impaired by interaction with ZC3H15.

It localises to the nucleus. It is found in the cytoplasm. The catalysed reaction is GTP + H2O = GDP + phosphate + H(+). With respect to regulation, the GTPase activity is enhanced by potassium ions as well as by DFRP1 binding. Functionally, catalyzes the conversion of GTP to GDP through hydrolysis of the gamma-phosphate bond in GTP. Appears to have an intrinsic GTPase activity that is stimulated by ZC3H15/DFRP1 binding likely by increasing the affinity for the potassium ions. When hydroxylated at C-3 of 'Lys-22' by JMJD7, may bind to RNA and play a role in translation. Binds to microtubules and promotes microtubule polymerization and bundling that are required for mitotic spindle assembly during prophase to anaphase transition. GTPase activity is not necessary for these microtubule-related functions. This chain is Developmentally-regulated GTP-binding protein 1 (DRG1), found in Bos taurus (Bovine).